A 289-amino-acid polypeptide reads, in one-letter code: Phosphatidylserine decarboxylase proenzyme (289 aa).

Residues aspartate 92, histidine 149, and serine 254 each act as charge relay system; for autoendoproteolytic cleavage activity in the active site. The active-site Schiff-base intermediate with substrate; via pyruvic acid; for decarboxylase activity is the serine 254. A Pyruvic acid (Ser); by autocatalysis modification is found at serine 254.

The protein belongs to the phosphatidylserine decarboxylase family. PSD-B subfamily. Prokaryotic type I sub-subfamily. Heterodimer of a large membrane-associated beta subunit and a small pyruvoyl-containing alpha subunit. Pyruvate serves as cofactor. In terms of processing, is synthesized initially as an inactive proenzyme. Formation of the active enzyme involves a self-maturation process in which the active site pyruvoyl group is generated from an internal serine residue via an autocatalytic post-translational modification. Two non-identical subunits are generated from the proenzyme in this reaction, and the pyruvate is formed at the N-terminus of the alpha chain, which is derived from the carboxyl end of the proenzyme. The autoendoproteolytic cleavage occurs by a canonical serine protease mechanism, in which the side chain hydroxyl group of the serine supplies its oxygen atom to form the C-terminus of the beta chain, while the remainder of the serine residue undergoes an oxidative deamination to produce ammonia and the pyruvoyl prosthetic group on the alpha chain. During this reaction, the Ser that is part of the protease active site of the proenzyme becomes the pyruvoyl prosthetic group, which constitutes an essential element of the active site of the mature decarboxylase.

The protein localises to the cell membrane. The catalysed reaction is a 1,2-diacyl-sn-glycero-3-phospho-L-serine + H(+) = a 1,2-diacyl-sn-glycero-3-phosphoethanolamine + CO2. The protein operates within phospholipid metabolism; phosphatidylethanolamine biosynthesis; phosphatidylethanolamine from CDP-diacylglycerol: step 2/2. Functionally, catalyzes the formation of phosphatidylethanolamine (PtdEtn) from phosphatidylserine (PtdSer). The protein is Phosphatidylserine decarboxylase proenzyme of Pseudomonas aeruginosa (strain UCBPP-PA14).